The primary structure comprises 257 residues: Zinc transporter ZupT (257 aa).

The next 8 helical transmembrane spans lie at 5–25, 32–52, 61–81, 109–129, 137–157, 171–191, 195–215, and 236–256; these read LILT…GVLG, LLAF…LMEM, GMSP…YFGL, AILL…ATFV, LGFG…LAVA, ILWA…AWLI, MISP…MVAL, and GVLC…TAGI. Residues Asn120 and Glu123 each contribute to the Fe(2+) site. The Zn(2+) site is built by Glu123 and His148. Fe(2+)-binding residues include Asn149, Glu152, and Glu181. Glu152 serves as a coordination point for Zn(2+).

The protein belongs to the ZIP transporter (TC 2.A.5) family. ZupT subfamily.

The protein resides in the cell inner membrane. It carries out the reaction Zn(2+)(in) = Zn(2+)(out). Its function is as follows. Mediates zinc uptake. May also transport other divalent cations. The sequence is that of Zinc transporter ZupT from Shigella flexneri serotype 5b (strain 8401).